The primary structure comprises 218 residues: N-(5'-phosphoribosyl)anthranilate isomerase (218 aa).

Belongs to the TrpF family.

The catalysed reaction is N-(5-phospho-beta-D-ribosyl)anthranilate = 1-(2-carboxyphenylamino)-1-deoxy-D-ribulose 5-phosphate. Its pathway is amino-acid biosynthesis; L-tryptophan biosynthesis; L-tryptophan from chorismate: step 3/5. This is N-(5'-phosphoribosyl)anthranilate isomerase from Bordetella pertussis (strain Tohama I / ATCC BAA-589 / NCTC 13251).